Here is a 98-residue protein sequence, read N- to C-terminus: NADH-ubiquinone oxidoreductase chain 4L (98 aa).

3 consecutive transmembrane segments (helical) span residues 2–22 (PSISTNIILAFITALLGMLIF), 29–49 (SLLCLEGMMLSMFILSTLTIL), and 61–81 (ILLLVFAACEAAVGLALLVTV).

Belongs to the complex I subunit 4L family. Core subunit of respiratory chain NADH dehydrogenase (Complex I) which is composed of 45 different subunits.

It is found in the mitochondrion inner membrane. The enzyme catalyses a ubiquinone + NADH + 5 H(+)(in) = a ubiquinol + NAD(+) + 4 H(+)(out). Core subunit of the mitochondrial membrane respiratory chain NADH dehydrogenase (Complex I) which catalyzes electron transfer from NADH through the respiratory chain, using ubiquinone as an electron acceptor. Part of the enzyme membrane arm which is embedded in the lipid bilayer and involved in proton translocation. In Eulemur coronatus (Crowned lemur), this protein is NADH-ubiquinone oxidoreductase chain 4L (MT-ND4L).